We begin with the raw amino-acid sequence, 784 residues long: SWI/SNF complex subunit SWI3C homolog (784 aa).

Residues 1-10 (MPRKASSTSD) are compositionally biased toward polar residues. Residues 1–68 (MPRKASSTSD…PEDADDETLA (68 aa)) are disordered. The segment covering 24–39 (ASPSPSNRSSAAAAAA) has biased composition (low complexity). The span at 43–66 (DDSDSAAVNEDDDSAVPEDADDET) shows a compositional bias: acidic residues. The SWIRM domain occupies 185–284 (HVVPKHSDWF…YLASGSVHRG (100 aa)). The segment at 355–409 (LSESSCSYCLQPLTSLHYQSLKEADIALCSDCFHDARYITGHSSLDFQRIDGDND) adopts a ZZ-type; degenerate zinc-finger fold. Zn(2+) contacts are provided by Cys360, Cys363, Cys383, and Cys386. Residues 413–464 (NDGDSWTDQETLLLLEGIEKYNDNWNNIAEHVGTKSKAQCIYHFIRLPVEDG) enclose the SANT domain. Disordered stretches follow at residues 667 to 702 (LASPGNSLPGGSTSTMSSNPMSMSPRPMGVPGSMPQ) and 760 to 784 (GMPNSVTPNHHQLLRSSSGNNSSVG). Residues 675–695 (PGGSTSTMSSNPMSMSPRPMG) are compositionally biased toward low complexity.

Interacts with LFR. Interacts with NMCP1.

It localises to the nucleus. Its subcellular location is the nucleoplasm. Component of a multiprotein complex equivalent of the SWI/SNF complex, an ATP-dependent chromatin-remodeling complex, which is required for the positive and negative regulation of gene expression of a large number of genes. It changes chromatin structure by altering DNA-histone contacts within a nucleosome, leading eventually to a change in nucleosome position, thus facilitating or repressing binding of gene-specific transcription factors. May be involved in positive response to drought stress and modulation of root growth through its interaction with NMCP1. The polypeptide is SWI/SNF complex subunit SWI3C homolog (Oryza sativa subsp. japonica (Rice)).